The primary structure comprises 339 residues: Tetraacyldisaccharide 4'-kinase (339 aa).

61 to 68 is a binding site for ATP; sequence TAGGTGKT.

The protein belongs to the LpxK family.

The enzyme catalyses a lipid A disaccharide + ATP = a lipid IVA + ADP + H(+). The protein operates within glycolipid biosynthesis; lipid IV(A) biosynthesis; lipid IV(A) from (3R)-3-hydroxytetradecanoyl-[acyl-carrier-protein] and UDP-N-acetyl-alpha-D-glucosamine: step 6/6. Transfers the gamma-phosphate of ATP to the 4'-position of a tetraacyldisaccharide 1-phosphate intermediate (termed DS-1-P) to form tetraacyldisaccharide 1,4'-bis-phosphate (lipid IVA). In Stenotrophomonas maltophilia (strain R551-3), this protein is Tetraacyldisaccharide 4'-kinase.